Reading from the N-terminus, the 352-residue chain is uncharacterized protein (352 aa).

Transmembrane regions (helical) follow at residues 6–26 (FIFLMFISIGILLLLLNIINP), 30–50 (FHIVEWKTIFSLFYLMVIINI), 76–96 (IFLTLFLSSLITNDVSLFVII), 151–171 (EFIINMIPFEIFGILAILPFL), 197–217 (FILVLLCVFGYLNFIYILPLI), 226–246 (VKVDYLFLLTFIFLFVDIEGL), 291–311 (WLPIAYGVNIGGNGTLIASFA), and 330–350 (LIGGIIYIMHLIVLVAYAKIF).

The protein belongs to the CitM (TC 2.A.11) transporter family.

The protein resides in the cell membrane. This is an uncharacterized protein from Methanocaldococcus jannaschii (strain ATCC 43067 / DSM 2661 / JAL-1 / JCM 10045 / NBRC 100440) (Methanococcus jannaschii).